We begin with the raw amino-acid sequence, 372 residues long: N-methyl-L-tryptophan oxidase (372 aa).

An FAD-binding site is contributed by 4–34 (DLIIIGSGSVGAAAGYYATRAGLKVLMTDAH). The residue at position 307 (cysteine 307) is an S-8alpha-FAD cysteine.

It belongs to the MSOX/MTOX family. MTOX subfamily. In terms of assembly, monomer. Requires FAD as cofactor.

The enzyme catalyses N(alpha)-methyl-L-tryptophan + O2 + H2O = L-tryptophan + formaldehyde + H2O2. Its function is as follows. Catalyzes the oxidative demethylation of N-methyl-L-tryptophan. This chain is N-methyl-L-tryptophan oxidase, found in Salmonella dublin (strain CT_02021853).